The primary structure comprises 71 residues: ATP synthase subunit c (71 aa).

2 helical membrane passes run 5-25 (GAAI…AIIV) and 47-67 (FIGV…GFLI).

This sequence belongs to the ATPase C chain family. In terms of assembly, F-type ATPases have 2 components, F(1) - the catalytic core - and F(0) - the membrane proton channel. F(1) has five subunits: alpha(3), beta(3), gamma(1), delta(1), epsilon(1). F(0) has three main subunits: a(1), b(2) and c(10-14). The alpha and beta chains form an alternating ring which encloses part of the gamma chain. F(1) is attached to F(0) by a central stalk formed by the gamma and epsilon chains, while a peripheral stalk is formed by the delta and b chains.

It is found in the cell membrane. F(1)F(0) ATP synthase produces ATP from ADP in the presence of a proton or sodium gradient. F-type ATPases consist of two structural domains, F(1) containing the extramembraneous catalytic core and F(0) containing the membrane proton channel, linked together by a central stalk and a peripheral stalk. During catalysis, ATP synthesis in the catalytic domain of F(1) is coupled via a rotary mechanism of the central stalk subunits to proton translocation. In terms of biological role, key component of the F(0) channel; it plays a direct role in translocation across the membrane. A homomeric c-ring of between 10-14 subunits forms the central stalk rotor element with the F(1) delta and epsilon subunits. This chain is ATP synthase subunit c, found in Alkalihalobacillus alcalophilus (Bacillus alcalophilus).